Here is a 785-residue protein sequence, read N- to C-terminus: Endonuclease MutS2 (785 aa).

333–340 (GPNTGGKT) is an ATP binding site. The region spanning 710-785 (LDLRGQRYDE…GNGATIVQLK (76 aa)) is the Smr domain.

Belongs to the DNA mismatch repair MutS family. MutS2 subfamily. As to quaternary structure, homodimer. Binds to stalled ribosomes, contacting rRNA.

In terms of biological role, endonuclease that is involved in the suppression of homologous recombination and thus may have a key role in the control of bacterial genetic diversity. Functionally, acts as a ribosome collision sensor, splitting the ribosome into its 2 subunits. Detects stalled/collided 70S ribosomes which it binds and splits by an ATP-hydrolysis driven conformational change. Acts upstream of the ribosome quality control system (RQC), a ribosome-associated complex that mediates the extraction of incompletely synthesized nascent chains from stalled ribosomes and their subsequent degradation. Probably generates substrates for RQC. This chain is Endonuclease MutS2, found in Lactobacillus acidophilus (strain ATCC 700396 / NCK56 / N2 / NCFM).